A 79-amino-acid polypeptide reads, in one-letter code: UPF0180 protein BCE_1513 (79 aa).

This sequence belongs to the UPF0180 family.

This Bacillus cereus (strain ATCC 10987 / NRS 248) protein is UPF0180 protein BCE_1513.